The primary structure comprises 122 residues: MIKKENRNWRRKKRHLSIRKKIHGTADRPRLCVYKSEKHIYAQIIDDDKGHTLVAASTLDKELRETLKKTWNKEAAREVGKLIGKRAIEKGIKKVVFDRGGYRYHGRVAELAEGAREAGLEF.

This sequence belongs to the universal ribosomal protein uL18 family. In terms of assembly, part of the 50S ribosomal subunit; part of the 5S rRNA/L5/L18/L25 subcomplex. Contacts the 5S and 23S rRNAs.

Functionally, this is one of the proteins that bind and probably mediate the attachment of the 5S RNA into the large ribosomal subunit, where it forms part of the central protuberance. This Thermosipho africanus (strain TCF52B) protein is Large ribosomal subunit protein uL18.